The sequence spans 435 residues: Phosphomethylpyrimidine synthase (435 aa).

Substrate is bound by residues asparagine 67, methionine 96, tyrosine 125, histidine 163, 185-187, 226-229, and glutamate 265; these read SRG and DGLR. Residue histidine 269 participates in Zn(2+) binding. A substrate-binding site is contributed by tyrosine 292. Position 333 (histidine 333) interacts with Zn(2+). [4Fe-4S] cluster is bound by residues cysteine 408, cysteine 411, and cysteine 415.

It belongs to the ThiC family. Requires [4Fe-4S] cluster as cofactor.

It catalyses the reaction 5-amino-1-(5-phospho-beta-D-ribosyl)imidazole + S-adenosyl-L-methionine = 4-amino-2-methyl-5-(phosphooxymethyl)pyrimidine + CO + 5'-deoxyadenosine + formate + L-methionine + 3 H(+). It participates in cofactor biosynthesis; thiamine diphosphate biosynthesis. In terms of biological role, catalyzes the synthesis of the hydroxymethylpyrimidine phosphate (HMP-P) moiety of thiamine from aminoimidazole ribotide (AIR) in a radical S-adenosyl-L-methionine (SAM)-dependent reaction. This chain is Phosphomethylpyrimidine synthase, found in Thermus thermophilus (strain ATCC 27634 / DSM 579 / HB8).